A 448-amino-acid chain; its full sequence is Cysteine--tRNA ligase (448 aa).

C27 is a binding site for Zn(2+). Positions 29 to 39 (PTVYNYIHVGN) match the 'HIGH' region motif. The Zn(2+) site is built by C210, H235, and E239. The 'KMSKS' region signature appears at 267 to 271 (KMSKS). K270 contributes to the ATP binding site.

The protein belongs to the class-I aminoacyl-tRNA synthetase family. Monomer. Zn(2+) serves as cofactor.

It localises to the cytoplasm. The enzyme catalyses tRNA(Cys) + L-cysteine + ATP = L-cysteinyl-tRNA(Cys) + AMP + diphosphate. The protein is Cysteine--tRNA ligase of Lactococcus lactis subsp. cremoris (strain MG1363).